A 370-amino-acid chain; its full sequence is MPSPLRTAPQPPLRAFHNPPALRRLYSSTSHSAATPATSPFAPRHLLSIADLTPTEFATLVRNASSHKRAIKSGSIPQSLHGALSGKTVAMMFSKRSTRTRISTEGAVVQMGGHPMFLGKDDIQLGVNESLYDTAVVVSSMVECIVARVGKHADVADLAKHSTKPVINALCDSYHPLQAIADFQTISEHFAASGKGKLEGLGLNGLKIAWVGDANNVLFDMAISARKMGVDVAVATPKGYEIPKEMLEIIEKAGEGVKSPGKLVQTNVPEEAVKGADVLVTDTWVSMGQEEEAAKRLRDFAGFQITSELAKRGGAKEGWRFMHCLPRHPEEVADEVFYGHRSLVFPEAENRLWAAISALEGFVVNKGKIE.

Residues M1–T38 constitute a mitochondrion transit peptide. Carbamoyl phosphate is bound by residues S97–T100, R148, H175, and Q178. N216, D282, S286, and M287 together coordinate L-ornithine. C324 functions as the Proton acceptor in the catalytic mechanism. Carbamoyl phosphate-binding positions include C324–L325 and R351.

It belongs to the aspartate/ornithine carbamoyltransferase superfamily. OTCase family. As to quaternary structure, homotrimer.

The protein localises to the mitochondrion matrix. It carries out the reaction carbamoyl phosphate + L-ornithine = L-citrulline + phosphate + H(+). It functions in the pathway amino-acid biosynthesis; L-arginine biosynthesis; L-arginine from L-ornithine and carbamoyl phosphate: step 1/3. This is Ornithine carbamoyltransferase, mitochondrial (argB) from Aspergillus niger.